Here is a 338-residue protein sequence, read N- to C-terminus: L-serine dehydratase (338 aa).

Lysine 39 is subject to N6-(pyridoxal phosphate)lysine.

It belongs to the serine/threonine dehydratase family. The cofactor is pyridoxal 5'-phosphate.

It is found in the cytoplasm. The catalysed reaction is L-serine = pyruvate + NH4(+). It participates in carbohydrate biosynthesis; gluconeogenesis. This chain is L-serine dehydratase (SDL1), found in Saccharomyces cerevisiae (Baker's yeast).